The sequence spans 391 residues: AN1-type zinc finger and UBX domain-containing protein DDB_G0268260 (391 aa).

The segment covering 1–16 has biased composition (low complexity); that stretch reads MQQQSPPTAPQQQQQQ. Residues 1 to 20 are disordered; it reads MQQQSPPTAPQQQQQQQRER. 2 consecutive AN1-type zinc fingers follow at residues 26–74 and 118–166; these read DHIG…QREN and APKS…IINS. Cysteine 32, cysteine 37, cysteine 47, cysteine 50, cysteine 55, histidine 58, histidine 64, cysteine 66, cysteine 124, cysteine 129, cysteine 139, cysteine 142, cysteine 147, histidine 150, histidine 156, and cysteine 158 together coordinate Zn(2+). A compositionally biased stretch (low complexity) spans 185–236; it reads NINNNINNNKNNNNNNNNNNNNNNNNNNNNNNNNNNNNNNNNNNNNNSNNNN. Residues 185–240 form a disordered region; that stretch reads NINNNINNNKNNNNNNNNNNNNNNNNNNNNNNNNNNNNNNNNNNNNNSNNNNKLIY. Residues 278–356 enclose the UBX domain; the sequence is SSEEIGEIGI…GLLPVSTLYM (79 aa).

The polypeptide is AN1-type zinc finger and UBX domain-containing protein DDB_G0268260 (Dictyostelium discoideum (Social amoeba)).